A 529-amino-acid chain; its full sequence is Bifunctional purine biosynthesis protein PurH (529 aa).

In terms of domain architecture, MGS-like spans 1–148 (MQQRRPVRRA…KNHKDVAIVV (148 aa)).

It belongs to the PurH family.

It carries out the reaction (6R)-10-formyltetrahydrofolate + 5-amino-1-(5-phospho-beta-D-ribosyl)imidazole-4-carboxamide = 5-formamido-1-(5-phospho-D-ribosyl)imidazole-4-carboxamide + (6S)-5,6,7,8-tetrahydrofolate. The catalysed reaction is IMP + H2O = 5-formamido-1-(5-phospho-D-ribosyl)imidazole-4-carboxamide. The protein operates within purine metabolism; IMP biosynthesis via de novo pathway; 5-formamido-1-(5-phospho-D-ribosyl)imidazole-4-carboxamide from 5-amino-1-(5-phospho-D-ribosyl)imidazole-4-carboxamide (10-formyl THF route): step 1/1. It participates in purine metabolism; IMP biosynthesis via de novo pathway; IMP from 5-formamido-1-(5-phospho-D-ribosyl)imidazole-4-carboxamide: step 1/1. The polypeptide is Bifunctional purine biosynthesis protein PurH (Salmonella schwarzengrund (strain CVM19633)).